A 319-amino-acid polypeptide reads, in one-letter code: Acetyl-coenzyme A carboxylase carboxyl transferase subunit alpha (319 aa).

The CoA carboxyltransferase C-terminal domain occupies N35 to D296.

The protein belongs to the AccA family. Acetyl-CoA carboxylase is a heterohexamer composed of biotin carboxyl carrier protein (AccB), biotin carboxylase (AccC) and two subunits each of ACCase subunit alpha (AccA) and ACCase subunit beta (AccD).

The protein resides in the cytoplasm. It carries out the reaction N(6)-carboxybiotinyl-L-lysyl-[protein] + acetyl-CoA = N(6)-biotinyl-L-lysyl-[protein] + malonyl-CoA. Its pathway is lipid metabolism; malonyl-CoA biosynthesis; malonyl-CoA from acetyl-CoA: step 1/1. In terms of biological role, component of the acetyl coenzyme A carboxylase (ACC) complex. First, biotin carboxylase catalyzes the carboxylation of biotin on its carrier protein (BCCP) and then the CO(2) group is transferred by the carboxyltransferase to acetyl-CoA to form malonyl-CoA. This chain is Acetyl-coenzyme A carboxylase carboxyl transferase subunit alpha, found in Escherichia coli O139:H28 (strain E24377A / ETEC).